Reading from the N-terminus, the 195-residue chain is Pyridoxal 5'-phosphate synthase subunit PdxT (195 aa).

46 to 48 provides a ligand contact to L-glutamine; it reads GES. Residue Cys78 is the Nucleophile of the active site. Residues Arg107 and 136–137 contribute to the L-glutamine site; that span reads IR. Catalysis depends on charge relay system residues His173 and Glu175.

This sequence belongs to the glutaminase PdxT/SNO family. In the presence of PdxS, forms a dodecamer of heterodimers. Only shows activity in the heterodimer.

The enzyme catalyses aldehydo-D-ribose 5-phosphate + D-glyceraldehyde 3-phosphate + L-glutamine = pyridoxal 5'-phosphate + L-glutamate + phosphate + 3 H2O + H(+). It carries out the reaction L-glutamine + H2O = L-glutamate + NH4(+). It functions in the pathway cofactor biosynthesis; pyridoxal 5'-phosphate biosynthesis. In terms of biological role, catalyzes the hydrolysis of glutamine to glutamate and ammonia as part of the biosynthesis of pyridoxal 5'-phosphate. The resulting ammonia molecule is channeled to the active site of PdxS. In Dehalococcoides mccartyi (strain ATCC BAA-2266 / KCTC 15142 / 195) (Dehalococcoides ethenogenes (strain 195)), this protein is Pyridoxal 5'-phosphate synthase subunit PdxT.